The following is a 190-amino-acid chain: Ribosome-recycling factor (190 aa).

It belongs to the RRF family.

It localises to the cytoplasm. Responsible for the release of ribosomes from messenger RNA at the termination of protein biosynthesis. May increase the efficiency of translation by recycling ribosomes from one round of translation to another. The polypeptide is Ribosome-recycling factor (Fusobacterium nucleatum subsp. nucleatum (strain ATCC 25586 / DSM 15643 / BCRC 10681 / CIP 101130 / JCM 8532 / KCTC 2640 / LMG 13131 / VPI 4355)).